The following is a 176-amino-acid chain: Jacalin-related lectin 19 (176 aa).

The 143-residue stretch at 12 to 154 (TVFVGPWGGN…LDSIGFHLSR (143 aa)) folds into the Jacalin-type lectin domain.

It belongs to the jacalin lectin family.

This is Jacalin-related lectin 19 (JAL19) from Arabidopsis thaliana (Mouse-ear cress).